Reading from the N-terminus, the 518-residue chain is Membrane-bound lytic murein transglycosylase F (518 aa).

The N-terminal stretch at methionine 1–alanine 21 is a signal peptide. Residues leucine 22–glycine 269 are non-LT domain. The segment at aspartate 270–asparagine 518 is LT domain. The active site involves glutamate 314.

The protein in the N-terminal section; belongs to the bacterial solute-binding protein 3 family. It in the C-terminal section; belongs to the transglycosylase Slt family.

The protein localises to the cell outer membrane. It carries out the reaction Exolytic cleavage of the (1-&gt;4)-beta-glycosidic linkage between N-acetylmuramic acid (MurNAc) and N-acetylglucosamine (GlcNAc) residues in peptidoglycan, from either the reducing or the non-reducing ends of the peptidoglycan chains, with concomitant formation of a 1,6-anhydrobond in the MurNAc residue.. Murein-degrading enzyme that degrades murein glycan strands and insoluble, high-molecular weight murein sacculi, with the concomitant formation of a 1,6-anhydromuramoyl product. Lytic transglycosylases (LTs) play an integral role in the metabolism of the peptidoglycan (PG) sacculus. Their lytic action creates space within the PG sacculus to allow for its expansion as well as for the insertion of various structures such as secretion systems and flagella. The protein is Membrane-bound lytic murein transglycosylase F of Escherichia coli (strain SMS-3-5 / SECEC).